A 241-amino-acid chain; its full sequence is Small ribosomal subunit protein uS3 (241 aa).

Positions 39 to 109 (IRQHVEKNLS…QIRINVIEVS (71 aa)) constitute a KH type-2 domain. The tract at residues 215-241 (EQAMAAPAPTPRKKRRPQQFEDRSNEE) is disordered. Residues 232 to 241 (QQFEDRSNEE) are compositionally biased toward basic and acidic residues.

Belongs to the universal ribosomal protein uS3 family. In terms of assembly, part of the 30S ribosomal subunit. Forms a tight complex with proteins S10 and S14.

Binds the lower part of the 30S subunit head. Binds mRNA in the 70S ribosome, positioning it for translation. The sequence is that of Small ribosomal subunit protein uS3 from Crocosphaera subtropica (strain ATCC 51142 / BH68) (Cyanothece sp. (strain ATCC 51142)).